Here is a 647-residue protein sequence, read N- to C-terminus: Methyl-accepting chemotaxis protein McpK (647 aa).

The Cytoplasmic portion of the chain corresponds to 1–16 (MYDWWVLQLAKLSVSR). Residues 17–37 (KLMVGFGVLLALLLLVVISSN) form a helical membrane-spanning segment. Residues 38 to 291 (RTLTHQTALS…LRESTASRDR (254 aa)) are Periplasmic-facing. One can recognise an HBM domain in the interval 45–287 (ALSEQLAEVA…AGRQLRESTA (243 aa)). A helical membrane pass occupies residues 292–312 (ASLWLIAALALAFGCVAGWAI). Over 313-647 (NRQIVRPLDE…LQAQVGRFRL (335 aa)) the chain is Cytoplasmic. The 57-residue stretch at 314–370 (RQIVRPLDEALAQAEAIAAGDLGKRPQNPLTLQRRDELGQLQRVMQRMGDSLRELVG) folds into the HAMP domain. The region spanning 375–611 (GVSQLASSAE…EINRSVLSVR (237 aa)) is the Methyl-accepting transducer domain.

It belongs to the methyl-accepting chemotaxis (MCP) protein family. Ligand free ligand-binding domain (LBD) is present in a monomer-dimer equilibrium. AlphaKG binding stabilizes the homodimer.

It localises to the cell inner membrane. Its function is as follows. Chemotactic-signal transducers respond to changes in the concentration of attractants and repellents in the environment, transduce a signal from the outside to the inside of the cell, and facilitate sensory adaptation through the variation of the level of methylation. McpK is a chemoreceptor that specifically binds and mediates chemotaxis to alpha-ketoglutarate (alphaKG). The protein is Methyl-accepting chemotaxis protein McpK of Pseudomonas aeruginosa (strain ATCC 15692 / DSM 22644 / CIP 104116 / JCM 14847 / LMG 12228 / 1C / PRS 101 / PAO1).